Consider the following 325-residue polypeptide: MESGAENQQSGDAAVTEAESQQMTVQAQPQIATLAQVSMPAAHATSSAPTVTLVQLPNGQTVQVHGVIQAAQPSVIQSPQVQTVQISTIAESEDSQESVDSVTDSQKRREILSRRPSYRKILNDLSSDAPGVPRIEEEKSEEETSAPAITTVTVPTPIYQTSSGQYIAITQGGAIQLANNGTDGVQGLQTLTMTNAAATQPGTTILQYAQTTDGQQILVPSNQVVVQAASGDVQTYQIRTAPTSTIAPGVVMASSPALPTQPAEEAARKREVRLMKNREAARECRRKKKEYVKCLENRVAVLENQNKTLIEELKALKDLYCHKSD.

2 stretches are compositionally biased toward polar residues: residues 1–11 (MESGAENQQSG) and 18–27 (AESQQMTVQA). 2 disordered regions span residues 1–27 (MESG…TVQA) and 92–111 (SEDS…RREI). A KID domain is found at 85–144 (QISTIAESEDSQESVDSVTDSQKRREILSRRPSYRKILNDLSSDAPGVPRIEEEKSEEET). Ser-117 carries the phosphoserine; by CaMK1, CaMK2, CaMK4, PKB/AKT1 or PKB/AKT2, RPS6KA3, RPS6KA4, RPS6KA5 and SGK1 modification. Lys-120 participates in a covalent cross-link: Glycyl lysine isopeptide (Lys-Gly) (interchain with G-Cter in SUMO2). The tract at residues 124–146 (DLSSDAPGVPRIEEEKSEEETSA) is disordered. A Phosphoserine; by CaMK2 modification is found at Ser-126. Phosphoserine; by HIPK2 is present on Ser-255. Residues 267 to 325 (ARKREVRLMKNREAARECRRKKKEYVKCLENRVAVLENQNKTLIEELKALKDLYCHKSD) enclose the bZIP domain. The segment at 268-293 (RKREVRLMKNREAARECRRKKKEYVK) is basic motif. Residues Lys-269 and Lys-288 each participate in a glycyl lysine isopeptide (Lys-Gly) (interchain with G-Cter in SUMO1) cross-link. The tract at residues 295 to 316 (LENRVAVLENQNKTLIEELKAL) is leucine-zipper.

This sequence belongs to the bZIP family. As to quaternary structure, interacts with PPRC1. Binds DNA as a dimer. This dimer is stabilized by magnesium ions. Interacts, through the bZIP domain, with the coactivators CRTC1/TORC1, CRTC2/TORC2 and CRTC3/TORC3. When phosphorylated on Ser-117, binds CREBBP. Interacts with CREBL2; regulates CREB1 phosphorylation, stability and transcriptional activity. Interacts (phosphorylated form) with TOX3. Interacts with ARRB1. Binds to HIPK2. Interacts with SGK1. Interacts with TSSK4; this interaction facilitates phosphorylation on Ser-117. Forms a complex with KMT2A and CREBBP. Interacts with TOX4; CREB1 is required for full induction of TOX4-dependent activity and the interaction is increased by cAMP and inhibited by insulin. Post-translationally, sumoylated with SUMO1. Sumoylation on Lys-288, but not on Lys-269, is required for nuclear localization of this protein. Sumoylation is enhanced under hypoxia, promoting nuclear localization and stabilization. Stimulated by phosphorylation. Phosphorylation of both Ser-117 and Ser-126 in the SCN regulates the activity of CREB and participates in circadian rhythm generation. Phosphorylation of Ser-117 allows CREBBP binding. Phosphorylated upon calcium influx by CaMK4 and CaMK2 on Ser-117. CaMK4 is much more potent than CaMK2 in activating CREB. Phosphorylated by CaMK2 on Ser-126. Phosphorylation of Ser-126 blocks CREB-mediated transcription even when Ser-117 is phosphorylated. Phosphorylated by CaMK1. Phosphorylation of Ser-255 by HIPK2 in response to genotoxic stress promotes CREB1 activity, facilitating the recruitment of the coactivator CBP. Phosphorylated at Ser-117 by RPS6KA3, RPS6KA4 and RPS6KA5 in response to mitogenic or stress stimuli. CREBL2 positively regulates phosphorylation at Ser-117 thereby stimulating CREB1 transcriptional activity. In liver, phosphorylation is induced by fasting or glucagon in a circadian fashion. Phosphorylated by TSSK4 on Ser-117.

It localises to the nucleus. Phosphorylation-dependent transcription factor that stimulates transcription upon binding to the DNA cAMP response element (CRE), a sequence present in many viral and cellular promoters. Transcription activation is enhanced by the TORC coactivators which act independently of Ser-117 phosphorylation. Involved in different cellular processes including the synchronization of circadian rhythmicity and the differentiation of adipose cells. Regulates the expression of apoptotic and inflammatory response factors in cardiomyocytes in response to ERFE-mediated activation of AKT signaling. This Bos taurus (Bovine) protein is Cyclic AMP-responsive element-binding protein 1 (CREB1).